Reading from the N-terminus, the 195-residue chain is ATP-dependent Clp protease proteolytic subunit (195 aa).

Catalysis depends on serine 99, which acts as the Nucleophile. The active site involves histidine 124.

The protein belongs to the peptidase S14 family. Fourteen ClpP subunits assemble into 2 heptameric rings which stack back to back to give a disk-like structure with a central cavity, resembling the structure of eukaryotic proteasomes.

It is found in the cytoplasm. It carries out the reaction Hydrolysis of proteins to small peptides in the presence of ATP and magnesium. alpha-casein is the usual test substrate. In the absence of ATP, only oligopeptides shorter than five residues are hydrolyzed (such as succinyl-Leu-Tyr-|-NHMec, and Leu-Tyr-Leu-|-Tyr-Trp, in which cleavage of the -Tyr-|-Leu- and -Tyr-|-Trp bonds also occurs).. In terms of biological role, cleaves peptides in various proteins in a process that requires ATP hydrolysis. Has a chymotrypsin-like activity. Plays a major role in the degradation of misfolded proteins. The protein is ATP-dependent Clp protease proteolytic subunit of Coxiella burnetii (strain RSA 331 / Henzerling II).